The primary structure comprises 223 residues: MKQESASQSTPPPSLSPAPSSAQPSWGDGDPQALWIFGYGSLVWKPDFAYSDSRVGFVRGYSRRFWQGDTFHRGSDKMPGRVVTLLEDREGCTWGVAYQVRGEQVNEALKYLNVREAVLGGYDTKEVTFYPQDTPDQPLTALAYVATPQNPGYLGPAPEEVIATQILACRGFSGHNLEYLLRLADFMQLCGPQAQDEHLEAIVDAVGTLLPCSYLPEQPLALT.

A disordered region spans residues 1–26; the sequence is MKQESASQSTPPPSLSPAPSSAQPSW. 36–41 provides a ligand contact to substrate; the sequence is IFGYGS. The active-site Proton acceptor is the Glu-116.

It belongs to the gamma-glutamylcyclotransferase family. ChaC subfamily. Interacts with NOTCH1 (via extracellular region). In terms of tissue distribution, widely expressed, with high expression in forebrain and anterior spinal cord. Expressed at intermediate level in the dorsal aorta and heart. Present throughout adult brain (at protein level).

It localises to the cytoplasm. The protein resides in the cytosol. It is found in the golgi apparatus. Its subcellular location is the trans-Golgi network. It carries out the reaction glutathione = L-cysteinylglycine + 5-oxo-L-proline. In terms of biological role, catalyzes the cleavage of glutathione into 5-oxo-L-proline and a Cys-Gly dipeptide. Acts specifically on glutathione, but not on other gamma-glutamyl peptides. Glutathione depletion is an important factor for apoptosis initiation and execution. Acts as a pro-apoptotic component of the unfolded protein response pathway by mediating the pro-apoptotic effects of the ATF4-ATF3-DDIT3/CHOP cascade. Negative regulator of Notch signaling pathway involved in embryonic neurogenesis: acts by inhibiting Notch cleavage by furin, maintaining Notch in an immature inactive form, thereby promoting neurogenesis in embryos. The chain is Glutathione-specific gamma-glutamylcyclotransferase 1 from Mus musculus (Mouse).